The sequence spans 166 residues: T-cell surface glycoprotein CD3 zeta chain (166 aa).

Residues 1–21 (MKWTALVIVAVLQTQFPVTAA) form the signal peptide. Residues 22–30 (QSFGLLDPK) are Extracellular-facing. A helical membrane pass occupies residues 31–51 (LCYLLDGILFIYGVIVTALFL). Topologically, residues 52–166 (RAKFSRSADA…ALHMQALPPR (115 aa)) are cytoplasmic. A Phosphoserine modification is found at serine 58. ITAM domains lie at 61-89 (APAY…LDRR), 100-128 (PQRK…EIGM), and 133-161 (QRRR…LHMQ). Residues tyrosine 64, tyrosine 72, tyrosine 83, tyrosine 111, tyrosine 123, tyrosine 144, and tyrosine 155 each carry the phosphotyrosine modification. The tract at residues 126-156 (IGMKSDNQRRRGKGHDGVYQGLSTATKDTYD) is disordered.

Belongs to the CD3Z/FCER1G family. As to quaternary structure, the TCR-CD3 complex is composed of a CD3D/CD3E and a CD3G/CD3E heterodimers that preferentially associate with TCRalpha and TCRbeta, respectively, to form TCRalpha/CD3E/CD3G and TCRbeta/CD3G/CD3E trimers. In turn, the hexamer interacts with CD3Z homodimer to form the TCR-CD3 complex. Alternatively, TCRalpha and TCRbeta can be replaced by TCRgamma and TCRdelta. Interacts with SLA. Interacts with TRAT1. Interacts with DOCK2. Interacts with SLA2. Interacts with SHB. Interacts with ZAP70. Interacts (tyrosine phosphorylated) with SHC1 (via SH2 domain). Interacts with PTPRC. Interacts with CRK; this interaction regulates CD3Z phosphorylation. Interacts (on T cell side) with CD81, ICAM1 and CD9 at immunological synapses between antigen-presenting cells and T cells. Interacts with CD160. Interacts with LY6E. Interacts with LY6E. The signaling subunit of immunoglobulin gamma (IgG) Fc receptor complex. As a homodimer or a heterodimer with FCER1G, associates with the ligand binding subunit FCGR3A (via transmembrane domain); this interaction is a prerequisite for Fc receptor complex expression on the cell surface. Interacts with CD5. Post-translationally, phosphorylated on Tyr residues after T-cell receptor triggering by LCK in association with CD4/CD8.

It localises to the cell membrane. Its function is as follows. Part of the TCR-CD3 complex present on T-lymphocyte cell surface that plays an essential role in adaptive immune response. When antigen presenting cells (APCs) activate T-cell receptor (TCR), TCR-mediated signals are transmitted across the cell membrane by the CD3 chains CD3D, CD3E, CD3G and CD3Z. All CD3 chains contain immunoreceptor tyrosine-based activation motifs (ITAMs) in their cytoplasmic domain. Upon TCR engagement, these motifs become phosphorylated by Src family protein tyrosine kinases LCK and FYN, resulting in the activation of downstream signaling pathways. CD3Z ITAMs phosphorylation creates multiple docking sites for the protein kinase ZAP70 leading to ZAP70 phosphorylation and its conversion into a catalytically active enzyme. Plays an important role in intrathymic T-cell differentiation. Additionally, participates in the activity-dependent synapse formation of retinal ganglion cells (RGCs) in both the retina and dorsal lateral geniculate nucleus (dLGN). This chain is T-cell surface glycoprotein CD3 zeta chain (CD247), found in Ovis aries (Sheep).